A 549-amino-acid polypeptide reads, in one-letter code: Probable glucuronosyltransferase Os01g0157700 (549 aa).

Residues 1–16 (MDSEERSKKRLRLWSR) are Cytoplasmic-facing. The chain crosses the membrane as a helical; Signal-anchor for type II membrane protein span at residues 17 to 37 (AVVHFSLCFAIGVFAALLPLA). Residues 38-549 (ATGATSIDSI…TPEEGKTKEG (512 aa)) lie on the Lumenal side of the membrane. N-linked (GlcNAc...) asparagine glycans are attached at residues asparagine 112, asparagine 139, asparagine 214, asparagine 229, asparagine 240, asparagine 251, asparagine 264, asparagine 269, and asparagine 300. Residues 232 to 252 (ETTWDSSSNTTQTTWDSSSNK) are disordered. A compositionally biased stretch (basic and acidic residues) spans 350–363 (IEQATPEKESLTKG). Disordered stretches follow at residues 350–371 (IEQA…SHDM), 413–432 (EQET…ESHD), and 441–524 (KIEE…KETH). Residues asparagine 421 and asparagine 452 are each glycosylated (N-linked (GlcNAc...) asparagine). Basic and acidic residues-rich tracts occupy residues 441-465 (KIEE…HDMM), 472-496 (KIDE…HDMM), and 503-524 (KIEE…KETH).

Belongs to the glycosyltransferase 43 family.

It localises to the golgi apparatus membrane. Functionally, involved in the synthesis of glucuronoxylan hemicellulose in secondary cell walls. The protein is Probable glucuronosyltransferase Os01g0157700 of Oryza sativa subsp. japonica (Rice).